We begin with the raw amino-acid sequence, 316 residues long: HTH-type transcriptional regulator cbl (316 aa).

Residues methionine 1–methionine 59 enclose the HTH lysR-type domain. Residues leucine 19–arginine 38 constitute a DNA-binding region (H-T-H motif).

The protein belongs to the LysR transcriptional regulatory family.

Functionally, may be an accessory regulatory protein within the cys regulon. In Escherichia coli (strain K12), this protein is HTH-type transcriptional regulator cbl (cbl).